Here is a 529-residue protein sequence, read N- to C-terminus: Bifunctional purine biosynthesis protein PurH (529 aa).

One can recognise an MGS-like domain in the interval 2–148; that stretch reads QHLRPIRRAL…KNHKDVTIVV (147 aa).

Belongs to the PurH family.

It catalyses the reaction (6R)-10-formyltetrahydrofolate + 5-amino-1-(5-phospho-beta-D-ribosyl)imidazole-4-carboxamide = 5-formamido-1-(5-phospho-D-ribosyl)imidazole-4-carboxamide + (6S)-5,6,7,8-tetrahydrofolate. The catalysed reaction is IMP + H2O = 5-formamido-1-(5-phospho-D-ribosyl)imidazole-4-carboxamide. It participates in purine metabolism; IMP biosynthesis via de novo pathway; 5-formamido-1-(5-phospho-D-ribosyl)imidazole-4-carboxamide from 5-amino-1-(5-phospho-D-ribosyl)imidazole-4-carboxamide (10-formyl THF route): step 1/1. Its pathway is purine metabolism; IMP biosynthesis via de novo pathway; IMP from 5-formamido-1-(5-phospho-D-ribosyl)imidazole-4-carboxamide: step 1/1. The sequence is that of Bifunctional purine biosynthesis protein PurH from Proteus mirabilis (strain HI4320).